The chain runs to 150 residues: Anti-sigma F factor (150 aa).

The protein belongs to the anti-sigma-factor family.

It catalyses the reaction L-seryl-[protein] + ATP = O-phospho-L-seryl-[protein] + ADP + H(+). The enzyme catalyses L-threonyl-[protein] + ATP = O-phospho-L-threonyl-[protein] + ADP + H(+). In terms of biological role, binds to sigma F and blocks its ability to form an RNA polymerase holoenzyme (E-sigma F). Phosphorylates SpoIIAA on a serine residue. This phosphorylation may enable SpoIIAA to act as an anti-anti-sigma factor that counteracts SpoIIAB and thus releases sigma F from inhibition. In Pasteuria penetrans, this protein is Anti-sigma F factor.